Reading from the N-terminus, the 179-residue chain is Ferric nitrobindin-like protein (179 aa).

The short motif at 17–23 (GRWEGLG) is the GXWXGXG element.

The protein belongs to the nitrobindin family.

The sequence is that of Ferric nitrobindin-like protein from Thermobifida fusca (strain YX).